Consider the following 395-residue polypeptide: MGKLENASWIHDSLMKYLNSTEEYLAYLCGPKRSDLSLPVSVVYALIFVVGVIGNLLVCLVIARHQTLKTPTNYYLFSLAVSDLLVLLLGMPLEVYELWHNYPFLFGPVGCYFKTALFETVCFASILSVTTVSIERYVAIVHPFRAKLESTRRRALRILSLVWSFSVVFSLPNTSIHGIKFQQFPNGSSVPGSATCTVTKPIWVYNFIIQATSFLFYILPMTLISVLYYLMGLRLKRDESLEADKVTVNIHRPSRKSVTKMLFVLVLVFAICWTPFHVDRLFFSFVDEWTESLAAVFNLIHVVSGVFFYLSSAVNPIIYNLLSRRFRAAFRNVVSPSCKWCHPQHRPQGPPAQKVIFLTECHLVELTEDAGPQFPCQSSIHNTQLTTVPCVEEVP.

Over 1–41 (MGKLENASWIHDSLMKYLNSTEEYLAYLCGPKRSDLSLPVS) the chain is Extracellular. 2 N-linked (GlcNAc...) asparagine glycosylation sites follow: Asn6 and Asn19. A helical transmembrane segment spans residues 42–62 (VVYALIFVVGVIGNLLVCLVI). Residues 63-74 (ARHQTLKTPTNY) lie on the Cytoplasmic side of the membrane. Residues 75–95 (YLFSLAVSDLLVLLLGMPLEV) form a helical membrane-spanning segment. Residues 96–115 (YELWHNYPFLFGPVGCYFKT) lie on the Extracellular side of the membrane. Cys111 and Cys196 are joined by a disulfide. The chain crosses the membrane as a helical span at residues 116–138 (ALFETVCFASILSVTTVSIERYV). The Cytoplasmic segment spans residues 139 to 157 (AIVHPFRAKLESTRRRALR). The chain crosses the membrane as a helical span at residues 158–178 (ILSLVWSFSVVFSLPNTSIHG). The Extracellular segment spans residues 179–212 (IKFQQFPNGSSVPGSATCTVTKPIWVYNFIIQAT). Asn186 carries an N-linked (GlcNAc...) asparagine glycan. A helical membrane pass occupies residues 213 to 233 (SFLFYILPMTLISVLYYLMGL). Topologically, residues 234-257 (RLKRDESLEADKVTVNIHRPSRKS) are cytoplasmic. Residues 258 to 278 (VTKMLFVLVLVFAICWTPFHV) form a helical membrane-spanning segment. The Extracellular portion of the chain corresponds to 279-293 (DRLFFSFVDEWTESL). Residues 294–314 (AAVFNLIHVVSGVFFYLSSAV) form a helical membrane-spanning segment. At 315-395 (NPIIYNLLSR…TTVPCVEEVP (81 aa)) the chain is on the cytoplasmic side.

It belongs to the G-protein coupled receptor 1 family. As to expression, expressed primarily in brain tissues, more specifically in medulla and spinal cord. Widespread distribution in peripheral tissues.

The protein resides in the cell membrane. Receptor for the neuromedin-U and neuromedin-S neuropeptides. This Mus musculus (Mouse) protein is Neuromedin-U receptor 2 (Nmur2).